Reading from the N-terminus, the 28-residue chain is Trypsin inhibitor 4 (28 aa).

3 disulfides stabilise this stretch: C2-C19, C9-C21, and C15-C27.

Belongs to the protease inhibitor I7 (squash-type serine protease inhibitor) family.

It is found in the secreted. Functionally, inhibits trypsin. The protein is Trypsin inhibitor 4 of Luffa aegyptiaca (Sponge gourd).